The primary structure comprises 398 residues: 1-deoxy-D-xylulose 5-phosphate reductoisomerase (398 aa).

NADPH contacts are provided by Thr10, Gly11, Ser12, Ile13, Gly36, Asn38, and Asn124. Lys125 contacts 1-deoxy-D-xylulose 5-phosphate. Glu126 is an NADPH binding site. Asp150 contacts Mn(2+). 1-deoxy-D-xylulose 5-phosphate is bound by residues Ser151, Glu152, Ser176, and His199. Glu152 is a Mn(2+) binding site. Gly205 contacts NADPH. 4 residues coordinate 1-deoxy-D-xylulose 5-phosphate: Ser212, Asn217, Lys218, and Glu221. Glu221 contacts Mn(2+).

The protein belongs to the DXR family. The cofactor is Mg(2+). Requires Mn(2+) as cofactor.

It catalyses the reaction 2-C-methyl-D-erythritol 4-phosphate + NADP(+) = 1-deoxy-D-xylulose 5-phosphate + NADPH + H(+). It participates in isoprenoid biosynthesis; isopentenyl diphosphate biosynthesis via DXP pathway; isopentenyl diphosphate from 1-deoxy-D-xylulose 5-phosphate: step 1/6. Catalyzes the NADPH-dependent rearrangement and reduction of 1-deoxy-D-xylulose-5-phosphate (DXP) to 2-C-methyl-D-erythritol 4-phosphate (MEP). This chain is 1-deoxy-D-xylulose 5-phosphate reductoisomerase, found in Nostoc punctiforme (strain ATCC 29133 / PCC 73102).